The chain runs to 195 residues: ATP-dependent Clp protease proteolytic subunit (195 aa).

The active-site Nucleophile is serine 101. The active site involves histidine 126.

Belongs to the peptidase S14 family. As to quaternary structure, component of the chloroplastic Clp protease core complex.

The protein localises to the plastid. The protein resides in the chloroplast stroma. The catalysed reaction is Hydrolysis of proteins to small peptides in the presence of ATP and magnesium. alpha-casein is the usual test substrate. In the absence of ATP, only oligopeptides shorter than five residues are hydrolyzed (such as succinyl-Leu-Tyr-|-NHMec, and Leu-Tyr-Leu-|-Tyr-Trp, in which cleavage of the -Tyr-|-Leu- and -Tyr-|-Trp bonds also occurs).. Functionally, cleaves peptides in various proteins in a process that requires ATP hydrolysis. Has a chymotrypsin-like activity. Plays a major role in the degradation of misfolded proteins. This Cucumis sativus (Cucumber) protein is ATP-dependent Clp protease proteolytic subunit.